The chain runs to 695 residues: Tripartite terminase subunit 1 (695 aa).

Residues 182-210 (CLECLQEVCLTPNQGTSLQAMLPDTACSH) form a C3H1-type zinc finger. 621-628 (YNRTWERE) serves as a coordination point for ATP.

This sequence belongs to the herpesviridae TRM1 protein family. As to quaternary structure, associates with TRM2 and TRM3 to form the tripartite terminase complex. Interacts with portal protein.

The protein localises to the host nucleus. Component of the molecular motor that translocates viral genomic DNA in empty capsid during DNA packaging. Forms a tripartite terminase complex together with TRM2 and TRM3 in the host cytoplasm. Once the complex reaches the host nucleus, it interacts with the capsid portal vertex. This portal forms a ring in which genomic DNA is translocated into the capsid. TRM1 carries an endonuclease activity that plays an important role for the cleavage of concatemeric viral DNA into unit length genomes. The protein is Tripartite terminase subunit 1 of Homo sapiens (Human).